The sequence spans 185 residues: Ribosome-recycling factor (185 aa).

Belongs to the RRF family.

The protein resides in the cytoplasm. In terms of biological role, responsible for the release of ribosomes from messenger RNA at the termination of protein biosynthesis. May increase the efficiency of translation by recycling ribosomes from one round of translation to another. The polypeptide is Ribosome-recycling factor (Clavibacter sepedonicus (Clavibacter michiganensis subsp. sepedonicus)).